The primary structure comprises 42 residues: Delta-hexatoxin-Hv1b (42 aa).

4 cysteine pairs are disulfide-bonded: Cys1-Cys15, Cys8-Cys20, Cys14-Cys31, and Cys16-Cys42.

Belongs to the neurotoxin 06 (delta-actx) family. In terms of tissue distribution, expressed by the venom gland.

It is found in the secreted. Lethal neurotoxin. Slows the inactivation of tetrodotoxin-sensitive voltage-gated sodium channels (Nav) by binding to site 3 of the channel, resulting in repetitive firing in autonomic and motor nerve fibers. The chain is Delta-hexatoxin-Hv1b from Hadronyche versuta (Blue mountains funnel-web spider).